Here is a 216-residue protein sequence, read N- to C-terminus: MQASLPGEKKVDTERLKRDLCPRKPIEIKYFSQICNDMMNKKDRLGDILHIILRACALNFGAGPRGGAGDEEDRSITNEEPIIPSVDEHGLKVCKLRSPNTPRRLRKTLDAVKALLVSSCACTARDLDIFDDNNGVAMWKWIKILYHEVAQETTLKDSYRITLVPSSDGISDTLTVIQSFSYSLLPVLSATYTSMIQQDASNCTLITTRTVHRSLD.

Belongs to the helicase family. Yeast subtelomeric Y' repeat subfamily.

This is an uncharacterized protein from Saccharomyces cerevisiae (strain ATCC 204508 / S288c) (Baker's yeast).